The primary structure comprises 398 residues: Nucleotide-sugar uncharacterized transporter 2 (398 aa).

Transmembrane regions (helical) follow at residues 54–74 (FCGP…IILA), 84–104 (FNFP…LLAF), 119–139 (TTPF…SGLA), 150–170 (FYQM…FVLF), 179–199 (VMAL…DLEF), 201–221 (LFGA…KILW), 242–262 (FTVF…VLLF), 271–291 (AILI…LALG), 299–319 (VVLG…IFGS), and 322–342 (GFIS…YTWL).

Belongs to the TPT transporter family. TPT (TC 2.A.7.9) subfamily.

It localises to the membrane. The polypeptide is Nucleotide-sugar uncharacterized transporter 2 (Arabidopsis thaliana (Mouse-ear cress)).